Reading from the N-terminus, the 815-residue chain is Phenylalanine--tRNA ligase beta subunit (815 aa).

Positions 40–155 (APPFDKIVVA…EDAPVGQNIR (116 aa)) constitute a tRNA-binding domain. The B5 domain maps to 406 to 485 (PQRRPVSLRL…RIYGFERIAA (80 aa)). Mg(2+)-binding residues include Asp-463, Asp-469, Glu-472, and Glu-473. Residues 712–814 (SKFPAAVRDL…LGEAFQARLR (103 aa)) form the FDX-ACB domain.

This sequence belongs to the phenylalanyl-tRNA synthetase beta subunit family. Type 1 subfamily. In terms of assembly, tetramer of two alpha and two beta subunits. It depends on Mg(2+) as a cofactor.

It localises to the cytoplasm. The enzyme catalyses tRNA(Phe) + L-phenylalanine + ATP = L-phenylalanyl-tRNA(Phe) + AMP + diphosphate + H(+). In Cupriavidus pinatubonensis (strain JMP 134 / LMG 1197) (Cupriavidus necator (strain JMP 134)), this protein is Phenylalanine--tRNA ligase beta subunit.